The chain runs to 200 residues: 3-isopropylmalate dehydratase small subunit (200 aa).

It belongs to the LeuD family. LeuD type 1 subfamily. Heterodimer of LeuC and LeuD.

The enzyme catalyses (2R,3S)-3-isopropylmalate = (2S)-2-isopropylmalate. It participates in amino-acid biosynthesis; L-leucine biosynthesis; L-leucine from 3-methyl-2-oxobutanoate: step 2/4. In terms of biological role, catalyzes the isomerization between 2-isopropylmalate and 3-isopropylmalate, via the formation of 2-isopropylmaleate. The protein is 3-isopropylmalate dehydratase small subunit of Vibrio atlanticus (strain LGP32) (Vibrio splendidus (strain Mel32)).